The sequence spans 440 residues: Proline--tRNA ligase (440 aa).

Belongs to the class-II aminoacyl-tRNA synthetase family. ProS type 2 subfamily. As to quaternary structure, homodimer.

Its subcellular location is the cytoplasm. The enzyme catalyses tRNA(Pro) + L-proline + ATP = L-prolyl-tRNA(Pro) + AMP + diphosphate. Functionally, catalyzes the attachment of proline to tRNA(Pro) in a two-step reaction: proline is first activated by ATP to form Pro-AMP and then transferred to the acceptor end of tRNA(Pro). The sequence is that of Proline--tRNA ligase from Xanthobacter autotrophicus (strain ATCC BAA-1158 / Py2).